We begin with the raw amino-acid sequence, 405 residues long: MNLDGTSGGFPAEEDHHNEERQTKNKRKTKHRHKFSEELLQELKEIFGENCYPDYTTRKTLAIKFDCPVNVIDNWFQNKRARLPPAERRRIFVLQKKHDFPVQAHSFLSCQETQAAAHNYATKQSLSGAQRALMRRAGCSHLEKQWIPSQEMGYNCFSLENQETPSQQVGPQCSYLEKPGIPSQQVGSQCSYLEKLGIPSQQVASQSSYLVTGTEKHPGCAMGYGGDTGSGHSGSGHSTAYHFLSYNSAECLHPPPSSVPYFHGERTETKESQHASPFLLDYAQGAYGVKKDHCLCSFCLSLLGQQQQNDWQYHLQQHQQPQNYLEGMMLQEQLPMDSGPWDLGKQWSSAQSQLQSQLPQNNGKPLCSQLQHMSLQIAADSPLLPLGQDMQERASEQPRTQMQQL.

Disordered stretches follow at residues 1 to 33 (MNLDGTSGGFPAEEDHHNEERQTKNKRKTKHRH) and 340 to 363 (PWDLGKQWSSAQSQLQSQLPQNNG). The segment covering 13–23 (EEDHHNEERQT) has biased composition (basic and acidic residues). A compositionally biased stretch (basic residues) spans 24 to 33 (KNKRKTKHRH). Residues 28–87 (KTKHRHKFSEELLQELKEIFGENCYPDYTTRKTLAIKFDCPVNVIDNWFQNKRARLPPAE) constitute a DNA-binding region (homeobox). Residues 346 to 360 (QWSSAQSQLQSQLPQ) show a composition bias toward low complexity.

Its subcellular location is the nucleus. Functionally, transcription factor that acts as activator. This is Cytoplasmic polyadenylated homeobox-like protein from Homo sapiens (Human).